The following is a 474-amino-acid chain: B-cell CLL/lymphoma 6 member B protein (474 aa).

Positions 38–105 constitute a BTB domain; the sequence is TDVTLLVGGQ…MYTSRLRLSP (68 aa). 2 disordered regions span residues 144-190 and 210-249; these read PVEV…PDPK and GSLV…GLQS. Positions 150-160 are enriched in pro residues; that stretch reads PRPPTVAPPGS. Residues 162–172 show a composition bias toward basic and acidic residues; the sequence is RRSEGHPDPPT. 3 stretches are compositionally biased toward polar residues: residues 173-183, 210-220, and 240-249; these read ESRSCSQGSPS, GSLVGESSGQP, and EEGTTPGLQS. 5 consecutive C2H2-type zinc fingers follow at residues 323–345, 351–373, 379–401, 407–429, and 435–458; these read YKCQ…RTVH, YRCS…SRIH, YKCE…VLIH, YPCP…VRIH, and YHCD…RQKH.

Associates with BCL6 through the BTB domain. As to expression, ubiquitously expressed with higher expression found in heart and lung.

The protein localises to the nucleus. Its function is as follows. Acts as a sequence-specific transcriptional repressor in association with BCL6. Necessary for activation of naive T-cells to antigenic stimulation. May attenuate the regulatory effect of BCL6 on antigenic activation of naive CD4 T-cells by forming a heterodimer with BCL6. The sequence is that of B-cell CLL/lymphoma 6 member B protein (Bcl6b) from Mus musculus (Mouse).